Consider the following 269-residue polypeptide: MANDKKKLTVNDIKNKKIKGEPIVMMTAYDALFAKIFNDYADIILVGDSLNMSFHLKKETISATMEMMLYHTNAVCAGAKSSFILADMPFGSYSDERSALKNAMKFFKQTEADAVKIEGGMKNVAIIKRLCEEGISVMGHIGLMPQFSKFEGGFKIKGRDETEVKRLMDEAKAIEQAGAFAILLEGTINSVAKQISDSVSVPVIGIGSGADVDGQVLVWSDMLGFFEDFKPKFAKRYLNGAELVRQSVQTYANEVKNRIFPSEEFSYKG.

Mg(2+) contacts are provided by aspartate 48 and aspartate 87. 3-methyl-2-oxobutanoate contacts are provided by residues aspartate 48 to serine 49, aspartate 87, and lysine 116. A Mg(2+)-binding site is contributed by glutamate 118. Residue glutamate 185 is the Proton acceptor of the active site.

Belongs to the PanB family. In terms of assembly, homodecamer; pentamer of dimers. Requires Mg(2+) as cofactor.

The protein localises to the cytoplasm. The enzyme catalyses 3-methyl-2-oxobutanoate + (6R)-5,10-methylene-5,6,7,8-tetrahydrofolate + H2O = 2-dehydropantoate + (6S)-5,6,7,8-tetrahydrofolate. Its pathway is cofactor biosynthesis; (R)-pantothenate biosynthesis; (R)-pantoate from 3-methyl-2-oxobutanoate: step 1/2. Its function is as follows. Catalyzes the reversible reaction in which hydroxymethyl group from 5,10-methylenetetrahydrofolate is transferred onto alpha-ketoisovalerate to form ketopantoate. This Campylobacter curvus (strain 525.92) protein is 3-methyl-2-oxobutanoate hydroxymethyltransferase.